Here is a 398-residue protein sequence, read N- to C-terminus: Homocysteine-responsive endoplasmic reticulum-resident ubiquitin-like domain member 2 protein (398 aa).

Residues 11-90 enclose the Ubiquitin-like domain; sequence VTLVIKAPNQ…HMVHLVCASR (80 aa). 2 disordered regions span residues 90–143 and 212–247; these read RTPP…SIRH and NQSTSNGENAQPVPRPVTNSENPPPNPPRAPPNVAP. The segment covering 96–125 has biased composition (low complexity); the sequence is PKASKSSKSMGTSSSGRSSSSGSANPGSTS. Pro residues predominate over residues 233–245; sequence NPPPNPPRAPPNV. The chain crosses the membrane as a helical span at residues 298 to 318; sequence FVMVMGALILVYMHQAGWFPL.

It is found in the membrane. Functionally, could be involved in the unfolded protein response (UPR) pathway. The protein is Homocysteine-responsive endoplasmic reticulum-resident ubiquitin-like domain member 2 protein (herpud2) of Xenopus laevis (African clawed frog).